The following is a 70-amino-acid chain: Conotoxin Im11.11 (70 aa).

The N-terminal stretch at 1 to 25 is a signal peptide; that stretch reads MFRLTSVGCILLVIAFLNLVGLTNA. 4 cysteine pairs are disulfide-bonded: cysteine 26–cysteine 40, cysteine 33–cysteine 45, cysteine 39–cysteine 49, and cysteine 44–cysteine 53. Proline 56 bears the Proline amide mark. Positions 60–70 are excised as a propeptide; that stretch reads TRLQGFFKHRR.

The protein belongs to the conotoxin I2 superfamily. In terms of tissue distribution, expressed by the venom duct.

The protein resides in the secreted. In terms of biological role, probable neurotoxin. The chain is Conotoxin Im11.11 from Conus imperialis (Imperial cone).